Reading from the N-terminus, the 529-residue chain is Nuclear protein localization protein 4 homolog 1 (529 aa).

In terms of domain architecture, MPN spans 129 to 266; that stretch reads IQIENQELVN…ITEYSMDRHY (138 aa). The RanBP2-type zinc finger occupies 499-529; that stretch reads SGGAVWNCGHCTFQNEAARQDCSMCGLPAAD.

It belongs to the NPL4 family. As to quaternary structure, forms a complex composed of ubxn-3, ufd-1, npl-4.1 and cdc-48.1; within the complex, interacts with ufd-1 and ubxn-3. Interacts with ufd-1. Interacts with elc-1/elongin C; the interaction may mediate the interaction between the npl-4-ufd-1-cdc-48 complex and the E3 ubiquitin ligase cul-2 complex.

Its subcellular location is the cytoplasm. The protein resides in the nucleus. Its function is as follows. In association with ufd-1 and ATPase cdc-48.1 and/or cdc-48.2, involved in the cytoplasmic elimination of misfolded proteins exported from the ER. This pathway, known as ERAD, prevents the activation of the unfolded protein response (UPR) caused by the accumulation of misfolded proteins in the ER. During S phase and in association with ufd-1, cdc-48.1 and/or cdc-48.2 and ubxn-3, ensures the degradation of DNA licensing factor cdt-1 after the initiation of DNA replication and thus the disassembly of the DNA replication CGM helicase complex by promoting the dissociation from chromatin of several of its components including cdc-45 and sld-5. Regulates ubxn-3 nuclear localization during S phase. In Caenorhabditis elegans, this protein is Nuclear protein localization protein 4 homolog 1.